The sequence spans 476 residues: MANSSKERLCGAGAPLGHANGFPPSVYPFAFSGGIRRSPPFEVLANGGFFRSFPTDLPKEMASLSLTMGAAERSAHSDCISTVETQSTSSEEMVPSSPSPPPPPRVYKPCFVCNDKSSGYHYGVSSCEGCKGFFRRSIQKNMVYTCHRDKNCQINKVTRNRCQFCRLQKCFQVGMSKEAVRNDRNKKKKEIKEEVVLPDSYEMPPEMEELIQKVSKAHQETFPSLCQLGKYTTNSSADQRVQLDLGLWDKFSELSTKCIIKIVEFAKRLPGFTTLTIADQITLLKSACLDILMLRICTRYTPEQDTMTFSDGLTLNRTQMHNAGFGPLTDLVFSFADQLLPLEMDDTETGLLSAICLICGDRMDLEEPEKVEKLQEPLLEALKFYARRRRPDKPYMFPRMLMKITDLRGISTKGAERAITLKLEIPGPMPPLIREMLENPEAFEDGAATPKPSERSSSESSNGSPTGEDSSGSKTP.

The modulating stretch occupies residues M1–P109. The segment covering S81 to S96 has biased composition (low complexity). Positions S81–P102 are disordered. 2 consecutive NR C4-type zinc fingers follow at residues C110 to C130 and C146 to C170. Residues C110–M175 constitute a DNA-binding region (nuclear receptor). The segment at S176–P205 is hinge. Residues R184 to K189 carry the Nuclear localization signal motif. The region spanning E206–P440 is the NR LBD domain. The interval E435–P476 is disordered. A compositionally biased stretch (polar residues) spans N462–P476.

It belongs to the nuclear hormone receptor family. NR1 subfamily. As to quaternary structure, heterodimer; with a rxr molecule. Binds DNA preferentially as a rar/rxr heterodimer. As to expression, expressed in embryos, tadpoles and various adult tissue such as kidney, testis, brain, liver, skeletal muscle and spleen.

The protein resides in the nucleus. Functionally, receptor for retinoic acid. Retinoic acid receptors bind as heterodimers to their target response elements in response to their ligands, all-trans or 9-cis retinoic acid, and regulate gene expression in various biological processes. The rar/rxr heterodimers bind to the retinoic acid response elements (RARE) composed of tandem 5'-AGGTCA-3' sites known as DR1-DR5. This chain is Retinoic acid receptor gamma (rarg), found in Xenopus laevis (African clawed frog).